We begin with the raw amino-acid sequence, 334 residues long: Holliday junction branch migration complex subunit RuvB (334 aa).

Residues 4-184 (ADRIISASPQ…FGIVQRLEFY (181 aa)) form a large ATPase domain (RuvB-L) region. ATP is bound by residues Ile-23, Arg-24, Gly-65, Lys-68, Thr-69, Thr-70, 131 to 133 (EDY), Arg-174, Tyr-184, and Arg-221. A Mg(2+)-binding site is contributed by Thr-69. The segment at 185–255 (NVDDLTSIVK…IAKQALVMLD (71 aa)) is small ATPAse domain (RuvB-S). A head domain (RuvB-H) region spans residues 258 to 334 (PQGFDFMDIK…YAHLGISLSE (77 aa)). DNA-binding residues include Arg-294, Arg-313, and Arg-318.

The protein belongs to the RuvB family. In terms of assembly, homohexamer. Forms an RuvA(8)-RuvB(12)-Holliday junction (HJ) complex. HJ DNA is sandwiched between 2 RuvA tetramers; dsDNA enters through RuvA and exits via RuvB. An RuvB hexamer assembles on each DNA strand where it exits the tetramer. Each RuvB hexamer is contacted by two RuvA subunits (via domain III) on 2 adjacent RuvB subunits; this complex drives branch migration. In the full resolvosome a probable DNA-RuvA(4)-RuvB(12)-RuvC(2) complex forms which resolves the HJ.

The protein localises to the cytoplasm. It catalyses the reaction ATP + H2O = ADP + phosphate + H(+). Functionally, the RuvA-RuvB-RuvC complex processes Holliday junction (HJ) DNA during genetic recombination and DNA repair, while the RuvA-RuvB complex plays an important role in the rescue of blocked DNA replication forks via replication fork reversal (RFR). RuvA specifically binds to HJ cruciform DNA, conferring on it an open structure. The RuvB hexamer acts as an ATP-dependent pump, pulling dsDNA into and through the RuvAB complex. RuvB forms 2 homohexamers on either side of HJ DNA bound by 1 or 2 RuvA tetramers; 4 subunits per hexamer contact DNA at a time. Coordinated motions by a converter formed by DNA-disengaged RuvB subunits stimulates ATP hydrolysis and nucleotide exchange. Immobilization of the converter enables RuvB to convert the ATP-contained energy into a lever motion, pulling 2 nucleotides of DNA out of the RuvA tetramer per ATP hydrolyzed, thus driving DNA branch migration. The RuvB motors rotate together with the DNA substrate, which together with the progressing nucleotide cycle form the mechanistic basis for DNA recombination by continuous HJ branch migration. Branch migration allows RuvC to scan DNA until it finds its consensus sequence, where it cleaves and resolves cruciform DNA. The chain is Holliday junction branch migration complex subunit RuvB from Haemophilus ducreyi (strain 35000HP / ATCC 700724).